The chain runs to 348 residues: Anthranilate phosphoribosyltransferase (348 aa).

5-phospho-alpha-D-ribose 1-diphosphate contacts are provided by residues glycine 81, 84-85, threonine 89, 91-94, 109-117, and serine 121; these read GD, NIST, and KHGNRAMSS. Glycine 81 is an anthranilate binding site. Serine 93 contacts Mg(2+). An anthranilate-binding site is contributed by asparagine 112. Arginine 167 contributes to the anthranilate binding site. Positions 226 and 227 each coordinate Mg(2+).

Belongs to the anthranilate phosphoribosyltransferase family. Homodimer. The cofactor is Mg(2+).

It catalyses the reaction N-(5-phospho-beta-D-ribosyl)anthranilate + diphosphate = 5-phospho-alpha-D-ribose 1-diphosphate + anthranilate. It participates in amino-acid biosynthesis; L-tryptophan biosynthesis; L-tryptophan from chorismate: step 2/5. In terms of biological role, catalyzes the transfer of the phosphoribosyl group of 5-phosphorylribose-1-pyrophosphate (PRPP) to anthranilate to yield N-(5'-phosphoribosyl)-anthranilate (PRA). This is Anthranilate phosphoribosyltransferase from Thermomicrobium roseum (strain ATCC 27502 / DSM 5159 / P-2).